A 78-amino-acid polypeptide reads, in one-letter code: Omega-conotoxin-like SO-4 (78 aa).

A signal peptide spans 1-22 (MKLTCMVIVAVLLLTACQLITA). The propeptide occupies 23–42 (DDSRGTQKHRSLRSTTKVSK). 3 disulfides stabilise this stretch: Cys-46–Cys-62, Cys-53–Cys-65, and Cys-61–Cys-72.

Belongs to the conotoxin O1 superfamily. As to expression, expressed by the venom duct.

It is found in the secreted. In terms of biological role, omega-conotoxins act at presynaptic membranes, they bind and block voltage-gated calcium channels (Cav). This chain is Omega-conotoxin-like SO-4 (SO4), found in Conus striatus (Striated cone).